Reading from the N-terminus, the 430-residue chain is Neuropeptide FF receptor 1 (430 aa).

Positions 1–20 (MEGEPSQPPNSSWPLSQNGT) are disordered. Over 1–43 (MEGEPSQPPNSSWPLSQNGTNTEATPATNLTFSSYYQHTSPVA) the chain is Extracellular. Residues 9–20 (PNSSWPLSQNGT) are compositionally biased toward polar residues. 3 N-linked (GlcNAc...) asparagine glycosylation sites follow: asparagine 10, asparagine 18, and asparagine 29. The helical transmembrane segment at 44 to 64 (AMFIVAYALIFLLCMVGNTLV) threads the bilayer. The Cytoplasmic segment spans residues 65-80 (CFIVLKNRHMHTVTNM). Residues 81–101 (FILNLAVSDLLVGIFCMPTTL) form a helical membrane-spanning segment. Residues 102–117 (VDNLITGWPFDNATCK) lie on the Extracellular side of the membrane. N-linked (GlcNAc...) asparagine glycosylation occurs at asparagine 113. Cysteine 116 and cysteine 203 are oxidised to a cystine. The helical transmembrane segment at 118–138 (MSGLVQGMSVSASVFTLVAIA) threads the bilayer. At 139–158 (VERFRCIVHPFREKLTLRKA) the chain is on the cytoplasmic side. A helical membrane pass occupies residues 159–179 (LVTIAVIWALALLIMCPSAVT). Over 180 to 214 (LTVTREEHHFMVDARNRSYPLYSCWEAWPEKGMRR) the chain is Extracellular. Asparagine 195 carries an N-linked (GlcNAc...) asparagine glycan. The chain crosses the membrane as a helical span at residues 215–235 (VYTTVLFSHIYLAPLALIVVM). The Cytoplasmic portion of the chain corresponds to 236–271 (YARIARKLCQAPGPAPGGEEAADPRASRRRARVVHM). A helical transmembrane segment spans residues 272–292 (LVMVALFFTLSWLPLWALLLL). At 293-307 (IDYGQLSAPQLHLVT) the chain is on the extracellular side. The helical transmembrane segment at 308-328 (VYAFPFAHWLAFFNSSANPII) threads the bilayer. The Cytoplasmic portion of the chain corresponds to 329–430 (YGYFNENFRR…LPLTIPAWDI (102 aa)). Over residues 379–404 (SDSGLPSESGPSSGAPRPGRLPLRNG) the composition is skewed to low complexity. Residues 379–413 (SDSGLPSESGPSSGAPRPGRLPLRNGRVAHHGLPR) are disordered.

Belongs to the G-protein coupled receptor 1 family.

It is found in the cell membrane. Its function is as follows. Receptor for NPAF (A-18-F-amide) and NPFF (F-8-F-amide) neuropeptides, also known as morphine-modulating peptides. Can also be activated by a variety of naturally occurring or synthetic FMRF-amide like ligands. This receptor mediates its action by association with G proteins that activate a phosphatidylinositol-calcium second messenger system. The protein is Neuropeptide FF receptor 1 of Homo sapiens (Human).